The primary structure comprises 576 residues: Formate--tetrahydrofolate ligase 2 (576 aa).

69 to 76 contacts ATP; the sequence is TPLGEGKT.

Belongs to the formate--tetrahydrofolate ligase family.

It carries out the reaction (6S)-5,6,7,8-tetrahydrofolate + formate + ATP = (6R)-10-formyltetrahydrofolate + ADP + phosphate. The protein operates within one-carbon metabolism; tetrahydrofolate interconversion. This Rubrobacter xylanophilus (strain DSM 9941 / JCM 11954 / NBRC 16129 / PRD-1) protein is Formate--tetrahydrofolate ligase 2.